A 140-amino-acid polypeptide reads, in one-letter code: Large ribosomal subunit protein uL14 (140 aa).

A Phosphoserine modification is found at Ser-17. Residue Tyr-38 is modified to Phosphotyrosine.

Belongs to the universal ribosomal protein uL14 family. Component of the large ribosomal subunit.

It is found in the cytoplasm. Functionally, component of the large ribosomal subunit. The ribosome is a large ribonucleoprotein complex responsible for the synthesis of proteins in the cell. The protein is Large ribosomal subunit protein uL14 (RPL23) of Canis lupus familiaris (Dog).